We begin with the raw amino-acid sequence, 72 residues long: Translation initiation factor IF-1 (72 aa).

In terms of domain architecture, S1-like spans 1–72 (MAKEEAIEIE…TKGRITYRYK (72 aa)).

Belongs to the IF-1 family. In terms of assembly, component of the 30S ribosomal translation pre-initiation complex which assembles on the 30S ribosome in the order IF-2 and IF-3, IF-1 and N-formylmethionyl-tRNA(fMet); mRNA recruitment can occur at any time during PIC assembly.

It localises to the cytoplasm. Functionally, one of the essential components for the initiation of protein synthesis. Stabilizes the binding of IF-2 and IF-3 on the 30S subunit to which N-formylmethionyl-tRNA(fMet) subsequently binds. Helps modulate mRNA selection, yielding the 30S pre-initiation complex (PIC). Upon addition of the 50S ribosomal subunit IF-1, IF-2 and IF-3 are released leaving the mature 70S translation initiation complex. This is Translation initiation factor IF-1 from Chlorobium phaeobacteroides (strain DSM 266 / SMG 266 / 2430).